A 473-amino-acid polypeptide reads, in one-letter code: JmjC domain-containing protein 4 (473 aa).

The region spanning 140 to 433 (PTDGLLTDFS…DFDHPYLDRN (294 aa)) is the JmjC domain. Positions 452-473 (TNKKNEKRPAEDDSPSQKKTCQ) are disordered.

It localises to the nucleus. Functionally, has a role in meiosis. The polypeptide is JmjC domain-containing protein 4 (jmj4) (Schizosaccharomyces pombe (strain 972 / ATCC 24843) (Fission yeast)).